Consider the following 739-residue polypeptide: NAD(P)H-quinone oxidoreductase subunit 5, chloroplastic (739 aa).

16 helical membrane passes run 9-29 (WVIP…LILI), 39-59 (IWAF…VQLS), 89-109 (IDPL…LVLI), 125-145 (FVYI…SNLI), 147-167 (IYFF…FWFT), 185-205 (GDFG…SLEF), 219-239 (NGVN…GAVA), 258-278 (TPIS…FLLA), 280-300 (LLPL…VGTI), 327-347 (LGYM…FHLI), 354-374 (ALLF…VGYS), 396-416 (TTFL…CFWS), 425-445 (WLYS…TAFY), 542-562 (LFPL…GISF), 610-630 (TLAI…YSFF), and 719-739 (ISSY…FFLS).

Belongs to the complex I subunit 5 family. In terms of assembly, NDH is composed of at least 16 different subunits, 5 of which are encoded in the nucleus.

Its subcellular location is the plastid. It is found in the chloroplast thylakoid membrane. The catalysed reaction is a plastoquinone + NADH + (n+1) H(+)(in) = a plastoquinol + NAD(+) + n H(+)(out). The enzyme catalyses a plastoquinone + NADPH + (n+1) H(+)(in) = a plastoquinol + NADP(+) + n H(+)(out). Functionally, NDH shuttles electrons from NAD(P)H:plastoquinone, via FMN and iron-sulfur (Fe-S) centers, to quinones in the photosynthetic chain and possibly in a chloroplast respiratory chain. The immediate electron acceptor for the enzyme in this species is believed to be plastoquinone. Couples the redox reaction to proton translocation, and thus conserves the redox energy in a proton gradient. This chain is NAD(P)H-quinone oxidoreductase subunit 5, chloroplastic (ndhF), found in Triticum aestivum (Wheat).